The sequence spans 464 residues: Soluble pyridine nucleotide transhydrogenase (464 aa).

Residue 35-44 participates in FAD binding; the sequence is DDRRQVGGNC.

This sequence belongs to the class-I pyridine nucleotide-disulfide oxidoreductase family. FAD is required as a cofactor.

The protein resides in the cytoplasm. It carries out the reaction NAD(+) + NADPH = NADH + NADP(+). Functionally, conversion of NADPH, generated by peripheral catabolic pathways, to NADH, which can enter the respiratory chain for energy generation. This is Soluble pyridine nucleotide transhydrogenase from Pseudomonas putida (strain ATCC 47054 / DSM 6125 / CFBP 8728 / NCIMB 11950 / KT2440).